The sequence spans 617 residues: Urocanate reductase (617 aa).

Thr70 carries the post-translational modification FMN phosphoryl threonine. 7 residues coordinate FAD: Ala124, Glu143, Asn151, Thr152, Gly156, Gly157, and Asp387. Arg446 functions as the Proton donor in the catalytic mechanism. FAD-binding residues include His553, Glu582, and Leu598.

Belongs to the FAD-dependent oxidoreductase 2 family. FRD/SDH subfamily. FAD is required as a cofactor. FMN serves as cofactor.

It catalyses the reaction dihydrourocanate + A = urocanate + AH2. Its function is as follows. Catalyzes the two-electron reduction of urocanate to dihydrourocanate (also named imidazole propionate or deamino-histidine). Dihydrourocanate is present at higher concentrations in subjects with type 2 diabetes, and directly impairs glucose tolerance and insulin signaling at the level of insulin receptor substrate (IRS) through activation of p38 gamma (MAPK12)-p62-mTORC1. Therefore, the UrdA enzyme from the gut bacteria L.fermentum strain NBRC 3956 may contribute to the pathogenesis of type 2 diabetes by producing the microbial metabolite dihydrourocanate. The chain is Urocanate reductase from Limosilactobacillus fermentum (strain NBRC 3956 / LMG 18251) (Lactobacillus fermentum).